Reading from the N-terminus, the 91-residue chain is Acylphosphatase (91 aa).

Residues 6–91 (CMRCYISGRV…WEDYISFDVL (86 aa)) form the Acylphosphatase-like domain. Residues arginine 21 and asparagine 39 contribute to the active site.

It belongs to the acylphosphatase family.

The catalysed reaction is an acyl phosphate + H2O = a carboxylate + phosphate + H(+). In Legionella pneumophila subsp. pneumophila (strain Philadelphia 1 / ATCC 33152 / DSM 7513), this protein is Acylphosphatase (acyP).